The primary structure comprises 184 residues: Elongation factor P (184 aa).

Belongs to the elongation factor P family.

The protein localises to the cytoplasm. It participates in protein biosynthesis; polypeptide chain elongation. In terms of biological role, involved in peptide bond synthesis. Stimulates efficient translation and peptide-bond synthesis on native or reconstituted 70S ribosomes in vitro. Probably functions indirectly by altering the affinity of the ribosome for aminoacyl-tRNA, thus increasing their reactivity as acceptors for peptidyl transferase. The chain is Elongation factor P from Variovorax paradoxus (strain S110).